A 65-amino-acid chain; its full sequence is Large ribosomal subunit protein uL29 (65 aa).

It belongs to the universal ribosomal protein uL29 family.

In Natranaerobius thermophilus (strain ATCC BAA-1301 / DSM 18059 / JW/NM-WN-LF), this protein is Large ribosomal subunit protein uL29.